The primary structure comprises 199 residues: Elongation factor Ts (199 aa).

Residues 81-84 (TDFV) form an involved in Mg(2+) ion dislocation from EF-Tu region.

The protein belongs to the EF-Ts family.

It is found in the cytoplasm. Functionally, associates with the EF-Tu.GDP complex and induces the exchange of GDP to GTP. It remains bound to the aminoacyl-tRNA.EF-Tu.GTP complex up to the GTP hydrolysis stage on the ribosome. This chain is Elongation factor Ts, found in Thermotoga sp. (strain RQ2).